The chain runs to 130 residues: UPF0102 protein RSc3265 (130 aa).

Belongs to the UPF0102 family.

The sequence is that of UPF0102 protein RSc3265 from Ralstonia nicotianae (strain ATCC BAA-1114 / GMI1000) (Ralstonia solanacearum).